The chain runs to 529 residues: Bifunctional purine biosynthesis protein PurH (529 aa).

Residues 2–148 (QQLRPIHRAL…KNHKDVAIVV (147 aa)) form the MGS-like domain.

This sequence belongs to the PurH family.

The catalysed reaction is (6R)-10-formyltetrahydrofolate + 5-amino-1-(5-phospho-beta-D-ribosyl)imidazole-4-carboxamide = 5-formamido-1-(5-phospho-D-ribosyl)imidazole-4-carboxamide + (6S)-5,6,7,8-tetrahydrofolate. It catalyses the reaction IMP + H2O = 5-formamido-1-(5-phospho-D-ribosyl)imidazole-4-carboxamide. It participates in purine metabolism; IMP biosynthesis via de novo pathway; 5-formamido-1-(5-phospho-D-ribosyl)imidazole-4-carboxamide from 5-amino-1-(5-phospho-D-ribosyl)imidazole-4-carboxamide (10-formyl THF route): step 1/1. It functions in the pathway purine metabolism; IMP biosynthesis via de novo pathway; IMP from 5-formamido-1-(5-phospho-D-ribosyl)imidazole-4-carboxamide: step 1/1. This Photorhabdus laumondii subsp. laumondii (strain DSM 15139 / CIP 105565 / TT01) (Photorhabdus luminescens subsp. laumondii) protein is Bifunctional purine biosynthesis protein PurH.